The sequence spans 249 residues: tRNA pseudouridine synthase A (249 aa).

The active-site Nucleophile is the aspartate 52. A substrate-binding site is contributed by tyrosine 110.

The protein belongs to the tRNA pseudouridine synthase TruA family. Homodimer.

It carries out the reaction uridine(38/39/40) in tRNA = pseudouridine(38/39/40) in tRNA. Formation of pseudouridine at positions 38, 39 and 40 in the anticodon stem and loop of transfer RNAs. In Azobacteroides pseudotrichonymphae genomovar. CFP2, this protein is tRNA pseudouridine synthase A.